Here is a 91-residue protein sequence, read N- to C-terminus: MAVKIRLTRLGSKRNPFYRIVVADARSPRDGRIIEQLGTYNPAHVNAPEVKIDEELALKWLHDGAKPTDTVHNILSREGILKKFDEQKNAK.

It belongs to the bacterial ribosomal protein bS16 family.

This is Small ribosomal subunit protein bS16 from Staphylococcus epidermidis (strain ATCC 35984 / DSM 28319 / BCRC 17069 / CCUG 31568 / BM 3577 / RP62A).